A 1876-amino-acid polypeptide reads, in one-letter code: Vitellogenin-2 (1876 aa).

Residues 1 to 16 (MMWKTLLCCLLAVSAA) form the signal peptide. The Vitellogenin domain occupies 21-838 (WEPGKRYEYH…SRDSFMPKSV (818 aa)). N-linked (GlcNAc...) asparagine glycosylation is found at Asn211 and Asn290. Residues 322-424 (TGEPSQRDSA…SSSSSSEEYL (103 aa)) are disordered. 2 stretches are compositionally biased toward low complexity: residues 330–368 (SAYA…SSSR) and 387–404 (SQPR…SKRS). Asn409 carries an N-linked (GlcNAc...) asparagine glycan. Residues 411 to 420 (SSSSSSSSSS) are compositionally biased toward low complexity. 5 N-linked (GlcNAc...) asparagine glycosylation sites follow: Asn595, Asn631, Asn932, Asn1012, and Asn1055. A disordered region spans residues 1192-1239 (SYDNRYTQPEEEEETRQHSKIRRPRSASRKHRRSRHEERAPLENLEVS). The span at 1209 to 1225 (HSKIRRPRSASRKHRRS) shows a compositional bias: basic residues. N-linked (GlcNAc...) asparagine glycosylation is found at Asn1318, Asn1398, Asn1417, Asn1424, Asn1469, Asn1532, Asn1636, Asn1719, Asn1760, and Asn1770. A VWFD domain is found at 1518–1703 (PTCVVDYSKV…TLVRDLDRSR (186 aa)). Cys1520 and Cys1664 are oxidised to a cystine. The segment at 1729 to 1788 (SGIRPYDIDDDSSSSSSSSSSSSSSSSSSKSNSTSSSSSESNESALPRGENKLHRAQQPS) is disordered. A compositionally biased stretch (low complexity) spans 1741-1772 (SSSSSSSSSSSSSSSSSKSNSTSSSSSESNES).

The protein localises to the secreted. Its function is as follows. Precursor of the egg-yolk proteins that are sources of nutrients during embryonic development. The sequence is that of Vitellogenin-2 (VG2) from Periplaneta americana (American cockroach).